A 206-amino-acid chain; its full sequence is MEPLPASFFNRPTVSVARDLLGARLVHEAPTGTRLVGRIVETEAYTEDDPACHASHLSRDPETGEVVGQGRGQDLFAAPGTAYVYLIYGVHWLLNVVTEPEGTAGAVLVRAVEPEEGLQDMRTERGVDRRVDLTNGPGKLAEAFGIDGEFHQTRLTARPLFFADGDSVDDEQVARSSRIGISKGVERSWRWYVAANRFVSPASPSG.

The protein belongs to the DNA glycosylase MPG family.

In Salinibacter ruber (strain DSM 13855 / M31), this protein is Putative 3-methyladenine DNA glycosylase.